A 274-amino-acid polypeptide reads, in one-letter code: 4-deoxy-L-threo-5-hexosulose-uronate ketol-isomerase (274 aa).

Zn(2+) is bound by residues His-192, His-194, Glu-199, and His-241.

This sequence belongs to the KduI family. It depends on Zn(2+) as a cofactor.

The catalysed reaction is 5-dehydro-4-deoxy-D-glucuronate = 3-deoxy-D-glycero-2,5-hexodiulosonate. It participates in glycan metabolism; pectin degradation; 2-dehydro-3-deoxy-D-gluconate from pectin: step 4/5. Catalyzes the isomerization of 5-dehydro-4-deoxy-D-glucuronate to 3-deoxy-D-glycero-2,5-hexodiulosonate. This Agrobacterium fabrum (strain C58 / ATCC 33970) (Agrobacterium tumefaciens (strain C58)) protein is 4-deoxy-L-threo-5-hexosulose-uronate ketol-isomerase.